Here is a 269-residue protein sequence, read N- to C-terminus: tRNA pseudouridine synthase A (269 aa).

The active-site Nucleophile is Asp55. Residue Tyr111 coordinates substrate.

This sequence belongs to the tRNA pseudouridine synthase TruA family.

It carries out the reaction uridine(38/39/40) in tRNA = pseudouridine(38/39/40) in tRNA. Its function is as follows. Formation of pseudouridine at positions 38, 39 and 40 in the anticodon stem and loop of transfer RNAs. This chain is tRNA pseudouridine synthase A, found in Methanosarcina barkeri (strain Fusaro / DSM 804).